Here is a 90-residue protein sequence, read N- to C-terminus: MSDTVFCRKYQKELDALPFPPLPGAKGQEIQQTVSKQAWDEWQALQTRLINEKHLSLLDPDARAYLMEQMERFLDNRETDQAEGYVPPSQ.

The protein belongs to the Fe(2+)-trafficking protein family.

In terms of biological role, could be a mediator in iron transactions between iron acquisition and iron-requiring processes, such as synthesis and/or repair of Fe-S clusters in biosynthetic enzymes. The polypeptide is Probable Fe(2+)-trafficking protein (Chromohalobacter salexigens (strain ATCC BAA-138 / DSM 3043 / CIP 106854 / NCIMB 13768 / 1H11)).